An 859-amino-acid chain; its full sequence is Protein SEY1 (859 aa).

The Cytoplasmic portion of the chain corresponds to 1-742; it reads MMMNSHFAGV…KRSAIGGITQ (742 aa). Residues 49–291 form the GB1/RHD3-type G domain; it reads GFNYHLISVF…FQPQYHRRIP (243 aa). 59–66 provides a ligand contact to GTP; sequence GSQSTGKS. Residues 476–496 are a coiled coil; it reads FEHELKVYRKDLDDVSGRLRK. Residues 525-544 are disordered; the sequence is LGTGRGGSGAPEHGERPPSE. Residues 743 to 763 traverse the membrane as a helical segment; it reads VPLYFYGLLVALGWNEIVAVL. Topologically, residues 764-766 are lumenal; it reads RNP. Residues 767 to 787 form a helical membrane-spanning segment; it reads VYFIFLILCAVGAYVTYTLNL. At 788–859 the chain is on the cytoplasmic side; the sequence is WGPMIRMGNA…DAEVEDLDDI (72 aa). Residues 816-859 are disordered; the sequence is SSESGRQAMAMSGNQPRGESVRMNRLNGNGKKDEDAEVEDLDDI. Residues 850-859 are compositionally biased toward acidic residues; it reads DAEVEDLDDI.

The protein belongs to the TRAFAC class dynamin-like GTPase superfamily. GB1/RHD3 GTPase family. RHD3 subfamily.

The protein resides in the endoplasmic reticulum membrane. Functionally, cooperates with the reticulon proteins and tubule-shaping DP1 family proteins to generate and maintain the structure of the tubular endoplasmic reticulum network. Has GTPase activity, which is required for its function in ER organization. The chain is Protein SEY1 from Phaeosphaeria nodorum (strain SN15 / ATCC MYA-4574 / FGSC 10173) (Glume blotch fungus).